Here is a 266-residue protein sequence, read N- to C-terminus: Hydroxyethylthiazole kinase (266 aa).

Met-43 is a substrate binding site. ATP contacts are provided by Arg-119 and Thr-166. Substrate is bound at residue Gly-193.

Belongs to the Thz kinase family. Mg(2+) is required as a cofactor.

It catalyses the reaction 5-(2-hydroxyethyl)-4-methylthiazole + ATP = 4-methyl-5-(2-phosphooxyethyl)-thiazole + ADP + H(+). The protein operates within cofactor biosynthesis; thiamine diphosphate biosynthesis; 4-methyl-5-(2-phosphoethyl)-thiazole from 5-(2-hydroxyethyl)-4-methylthiazole: step 1/1. Its function is as follows. Catalyzes the phosphorylation of the hydroxyl group of 4-methyl-5-beta-hydroxyethylthiazole (THZ). The chain is Hydroxyethylthiazole kinase from Methanococcus maripaludis (strain C6 / ATCC BAA-1332).